The sequence spans 376 residues: 1-deoxy-D-xylulose 5-phosphate reductoisomerase (376 aa).

Residues S10, G11, S12, V13, G36, K37, N38, and N118 each contribute to the NADPH site. K119 lines the 1-deoxy-D-xylulose 5-phosphate pocket. E120 provides a ligand contact to NADPH. Residue D144 coordinates Mn(2+). Residues S145, E146, S170, and H193 each coordinate 1-deoxy-D-xylulose 5-phosphate. Residue E146 coordinates Mn(2+). G199 serves as a coordination point for NADPH. Residues S206, N211, K212, and E215 each coordinate 1-deoxy-D-xylulose 5-phosphate. Position 215 (E215) interacts with Mn(2+).

Belongs to the DXR family. Mg(2+) serves as cofactor. Requires Mn(2+) as cofactor.

It carries out the reaction 2-C-methyl-D-erythritol 4-phosphate + NADP(+) = 1-deoxy-D-xylulose 5-phosphate + NADPH + H(+). Its pathway is isoprenoid biosynthesis; isopentenyl diphosphate biosynthesis via DXP pathway; isopentenyl diphosphate from 1-deoxy-D-xylulose 5-phosphate: step 1/6. Catalyzes the NADPH-dependent rearrangement and reduction of 1-deoxy-D-xylulose-5-phosphate (DXP) to 2-C-methyl-D-erythritol 4-phosphate (MEP). The chain is 1-deoxy-D-xylulose 5-phosphate reductoisomerase from Macrococcus caseolyticus (strain JCSC5402) (Macrococcoides caseolyticum).